A 244-amino-acid chain; its full sequence is Small ribosomal subunit protein uS2 (244 aa).

This sequence belongs to the universal ribosomal protein uS2 family.

In Buchnera aphidicola subsp. Schizaphis graminum (strain Sg), this protein is Small ribosomal subunit protein uS2.